The sequence spans 156 residues: Putative pre-16S rRNA nuclease (156 aa).

Belongs to the YqgF nuclease family.

It is found in the cytoplasm. Its function is as follows. Could be a nuclease involved in processing of the 5'-end of pre-16S rRNA. The chain is Putative pre-16S rRNA nuclease from Streptomyces avermitilis (strain ATCC 31267 / DSM 46492 / JCM 5070 / NBRC 14893 / NCIMB 12804 / NRRL 8165 / MA-4680).